Here is a 623-residue protein sequence, read N- to C-terminus: Adenine deaminase 2 (623 aa).

The protein belongs to the metallo-dependent hydrolases superfamily. Adenine deaminase family. Mn(2+) serves as cofactor.

The enzyme catalyses adenine + H2O + H(+) = hypoxanthine + NH4(+). This is Adenine deaminase 2 from Jannaschia sp. (strain CCS1).